The following is a 144-amino-acid chain: Superoxide dismutase [Mn], mitochondrial (144 aa).

The Mn(2+) site is built by His10, His58, and Asp143.

The protein belongs to the iron/manganese superoxide dismutase family. Homotetramer. Mn(2+) serves as cofactor.

Its subcellular location is the mitochondrion matrix. The catalysed reaction is 2 superoxide + 2 H(+) = H2O2 + O2. Destroys superoxide anion radicals which are normally produced within the cells and which are toxic to biological systems. The sequence is that of Superoxide dismutase [Mn], mitochondrial from Branchiostoma floridae (Florida lancelet).